Here is a 215-residue protein sequence, read N- to C-terminus: MPGRGGQSLSMVCVDVWILALSVLSVMADATSVPVTESCDSQGPPGLPGPPGLPGPPGPPGPPGPPGLRGPTGIPGDIESCLSPPKSAFAVKMNDPLPAPSQPIVFKEALHNDQDHFNLTTGVFTCTIPGVYRFGFDIELFQHAVKLGLMKNDTQILEKESKAKDNYRHLSGNVVLQLTLGDRVWLESKLDTTETEKGPIQSMFFGYLLYGNYPG.

A signal peptide spans 1-30 (MPGRGGQSLSMVCVDVWILALSVLSVMADA). The segment at 35 to 79 (VTESCDSQGPPGLPGPPGLPGPPGPPGPPGPPGLRGPTGIPGDIE) is disordered. Residues 43–76 (GPPGLPGPPGLPGPPGPPGPPGPPGLRGPTGIPG) form the Collagen-like domain. Over residues 45–68 (PGLPGPPGLPGPPGPPGPPGPPGL) the composition is skewed to pro residues. A C1q domain is found at 82 to 215 (LSPPKSAFAV…GYLLYGNYPG (134 aa)).

It localises to the secreted. This is Protein HP-25 homolog 2 from Bos taurus (Bovine).